The primary structure comprises 1136 residues: Protein stu-1 (1136 aa).

2 HEAT repeats span residues 95–133 and 167–205; these read TLPV…ERSV and YVPT…KSDL. Disordered stretches follow at residues 524–554, 567–794, and 821–884; these read KDPH…MGAP, RAMA…QPQI, and TAGQ…LLDS. The span at 595-622 shows a compositional bias: low complexity; the sequence is VSSTSQASVASASTASAVPAPTKSAFGA. The span at 659 to 668 shows a compositional bias: pro residues; that stretch reads PAEPASPPSK. Residues 673 to 683 show a composition bias toward polar residues; the sequence is TVTSPKTQTLV. Positions 701–716 are enriched in low complexity; it reads SSESGIPIPVSGISSP. Composition is skewed to polar residues over residues 777–793 and 822–833; these read LPTQ…QQPQ and AGQTQPQSTYTS.

Belongs to the CLASP family. Interacts with microtubules.

It is found in the nucleus. The protein resides in the cytoplasm. The protein localises to the cytoskeleton. It localises to the spindle. Microtubule binding protein that promotes the stabilization of dynamic microtubules. Required for mitotic spindle formation. In Neurospora crassa (strain ATCC 24698 / 74-OR23-1A / CBS 708.71 / DSM 1257 / FGSC 987), this protein is Protein stu-1 (stu-1).